The primary structure comprises 876 residues: Alanine--tRNA ligase (876 aa).

His560, His564, Cys662, and His666 together coordinate Zn(2+).

It belongs to the class-II aminoacyl-tRNA synthetase family. Zn(2+) is required as a cofactor.

It is found in the cytoplasm. The enzyme catalyses tRNA(Ala) + L-alanine + ATP = L-alanyl-tRNA(Ala) + AMP + diphosphate. Catalyzes the attachment of alanine to tRNA(Ala) in a two-step reaction: alanine is first activated by ATP to form Ala-AMP and then transferred to the acceptor end of tRNA(Ala). Also edits incorrectly charged Ser-tRNA(Ala) and Gly-tRNA(Ala) via its editing domain. The chain is Alanine--tRNA ligase from Synechococcus elongatus (strain ATCC 33912 / PCC 7942 / FACHB-805) (Anacystis nidulans R2).